Here is a 495-residue protein sequence, read N- to C-terminus: MVYENPDGVRIGLEIHIQLNKLKTKMFCGCSTDYHNAAPNTHTCPICLGLPGTLPVLNKKAVEAAIKVGLALEGEIAEETQFHRKNYFYPDLPKGFQITQYDFPIVSNGKVVIEGEDGEHTVGITRAHMEEDPGKLVHIGSIEKSKGVLIDYNRSGVPLIETVTEPDMRSPKEARRFLDKFRNILEYLDVFDGNLEGAMRVDANVSVHWGTRVEVKNISSHKGVEKALLYEIMRQKNVIRRGGKVSQETRHFDEGRGVTLSMRTKEEAEDYRYFREPDLMPMRITGWIPSIKKTLPELPDAKRARFIEQYGITDMHAKSLTSKIMLADFYESVCAKGVDPKIAATWTADVFLGELNYRDLEISSYDGKKIGFIHAKDPGIKNSIKASDMVELINLFAEGKISDRAAVEVIRTMLDAAEEKTPSQIIEEKGLFKAEDDLVTKAIAETIAENEAAVQDYIGGTEKSLNFLVGQVMKKTKGTADAKTARELIIKELKG.

The protein belongs to the GatB/GatE family. GatB subfamily. Heterotrimer of A, B and C subunits.

It carries out the reaction L-glutamyl-tRNA(Gln) + L-glutamine + ATP + H2O = L-glutaminyl-tRNA(Gln) + L-glutamate + ADP + phosphate + H(+). The catalysed reaction is L-aspartyl-tRNA(Asn) + L-glutamine + ATP + H2O = L-asparaginyl-tRNA(Asn) + L-glutamate + ADP + phosphate + 2 H(+). In terms of biological role, allows the formation of correctly charged Asn-tRNA(Asn) or Gln-tRNA(Gln) through the transamidation of misacylated Asp-tRNA(Asn) or Glu-tRNA(Gln) in organisms which lack either or both of asparaginyl-tRNA or glutaminyl-tRNA synthetases. The reaction takes place in the presence of glutamine and ATP through an activated phospho-Asp-tRNA(Asn) or phospho-Glu-tRNA(Gln). This is Aspartyl/glutamyl-tRNA(Asn/Gln) amidotransferase subunit B from Methanosarcina barkeri (strain Fusaro / DSM 804).